Reading from the N-terminus, the 112-residue chain is DNA-directed RNA polymerases I and III subunit RPAC2 (112 aa).

The protein belongs to the archaeal Rpo11/eukaryotic RPB11/RPC19 RNA polymerase subunit family. As to quaternary structure, component of the RNA polymerase I (Pol I) and RNA polymerase III (Pol III) complexes consisting of at least 13 and 17 subunits, respectively.

It localises to the nucleus. Its function is as follows. DNA-dependent RNA polymerase catalyzes the transcription of DNA into RNA using the four ribonucleoside triphosphates as substrates. Common core component of RNA polymerases I and III which synthesize ribosomal RNA precursors and small RNAs, such as 5S rRNA and tRNAs, respectively. In Danio rerio (Zebrafish), this protein is DNA-directed RNA polymerases I and III subunit RPAC2 (polr1d).